We begin with the raw amino-acid sequence, 248 residues long: MDIVRSPISTLNHIYEISGVEVGQHFYWQIGGFQVHGQVLLTSWVVIAVLLGSATIAVRDPQTIPTGGQNFVEYILEFFRDLTRTQIGEEEYGPWVPFIGTMFLFIFVSNWSGALLPWGILKLPQGELAAPTNDINTTVALALLTSVAYFYAGLTKKGLGYFGKYIQPTPILLPINILEDFTKPLSLSFRLFGNILADELVVAVLVSLVPLIVPIPVMFLGLFTSGIQALIFATLAAAYIGESMEGHH.

The next 5 membrane-spanning stretches (helical) occupy residues 38–58 (QVLL…TIAV), 96–116 (VPFI…GALL), 135–155 (INTT…AGLT), 200–220 (LVVA…VMFL), and 221–241 (GLFT…AYIG).

This sequence belongs to the ATPase A chain family. In terms of assembly, F-type ATPases have 2 components, CF(1) - the catalytic core - and CF(0) - the membrane proton channel. CF(1) has five subunits: alpha(3), beta(3), gamma(1), delta(1), epsilon(1). CF(0) has four main subunits: a, b, b' and c.

The protein localises to the plastid. Its subcellular location is the chloroplast thylakoid membrane. Functionally, key component of the proton channel; it plays a direct role in the translocation of protons across the membrane. The sequence is that of ATP synthase subunit a, chloroplastic from Pinus thunbergii (Japanese black pine).